Consider the following 625-residue polypeptide: Enolase 4 (625 aa).

The interval Tyr-184–Glu-226 is disordered. Residues Thr-189–Pro-203 are compositionally biased toward pro residues. Val-300 provides a ligand contact to substrate. A disordered region spans residues Pro-331–Gln-350. Residues Ala-336 to Lys-346 are compositionally biased toward basic and acidic residues. Asn-497 serves as the catalytic Proton acceptor. Gly-548 is a substrate binding site. The disordered stretch occupies residues Pro-604–Gly-625.

It belongs to the enolase family. In terms of assembly, interacts with ENO1 and AKAP4. Post-translationally, synthesized as an approximately 70-kDa precursor, which then undergoes proteolytic cleavage to an approximately 60-kDa enzyme; HOATZ associates directly or indirectly with ENO4 to mediate this process before its transport to mature flagella.

The enzyme catalyses (2R)-2-phosphoglycerate = phosphoenolpyruvate + H2O. It participates in carbohydrate degradation; glycolysis; pyruvate from D-glyceraldehyde 3-phosphate: step 4/5. May be required for sperm motility and function. This Homo sapiens (Human) protein is Enolase 4.